The chain runs to 508 residues: Cell death protein 3 (508 aa).

A propeptide spanning residues 1–223 (MMRQDRRNLL…FHEEDMNYVD (223 aa)) is cleaved from the precursor. Positions 2 to 91 (MRQDRRNLLE…HELAAVLEPL (90 aa)) constitute a CARD domain. 2 disordered regions span residues 106 to 130 (PMSP…TRVH) and 148 to 184 (YTRA…SSAN). A compositionally biased stretch (polar residues) spans 118-127 (LSPSTFSSPT). Residues 171-184 (SPSNSFQSQPSSAN) show a composition bias toward low complexity. Residues H317 and C360 contribute to the active site. The segment at 392-407 (GPLFNFLGCVRPQAQQ) is required for interaction with ced-4.

This sequence belongs to the peptidase C14A family. As to quaternary structure, the active form is probably a heterodimer of the p17 subunit with either the p15 or p13 subunit which are all derived from the precursor by autocatalysis. Interacts with octameric ced-4 (two ced-3 zymogens per one ced-4 octamer); the interaction causes the autoproteolytic cleavage and activation of ced-3. Processed ced-3 also interacts with ced-4 octamer to form a stable holoenzyme. Interacts (via large subunit p17) with csp-3; the interaction prevents ced-3 autoactivation and delays ced-4-induced ced-3 processing. Interacts (via large subunit p17 or small subunit p13 or p15) with csp-2; the interaction inhibits ced-3 autoactivation. Interacts (via propeptide) with nucleoporin npp-14; the interaction tethers ced-3 to the nuclear membrane and prevents its autoprocessing in absence of ced-4. Interacts with dct-1. May form a complex composed of ced-3, ced-4 and mac-1. Autocatalytic cleavage removes the propeptide and generates the catalytic subunit p17 and two non-catalytic subunits p15 and p13; autoproteolysis is induced by ced-4 oligomer. Cleaved by caspase csp-1 probably at Asp-146 and Asp-376.

It is found in the nucleus membrane. It localises to the perikaryon. The protein localises to the synapse. The protein resides in the mitochondrion. Its subcellular location is the cytoplasm. It is found in the perinuclear region. It carries out the reaction Strict requirement for an Asp residue at position P1 and has a preferred cleavage sequence of Asp-Glu-Val-Asp-|-.. With respect to regulation, octameric ced-4 activates zymogen autoprocessing and enhances activity of processed ced-3. Zymogen autoactivation is inhibited by csp-3. csp-3 has no effect on active ced-3. Zymogen autoactivation is inhibited by csp-2. Inhibited by cysteine protease inhibitor iodoacetic acid (CH3COOI). Inhibited by benzyloxycarbonyl-DEVD-fluoro-methyl ketone (zDEVD-fmk). Inhibited by benzyloxycarbonyl-VAD-fluoro-methyl ketone (zVAD-fmk). Not inhibited by N-[N-(L-3-transcarboxirane-2-carbonyl)-leucyl]-agmatine (E-64) or by the serine and cysteine protease inhibitor L-1-chloro-3-[4-to-osylamido]-7-amino-2-heptanone (TLCK). In terms of biological role, acts as a cysteine protease in controlling programmed cell death (apoptosis) by proteolytically activating or inactivating a wide range of substrates. Component of the egl-1, ced-9, ced-4 and ced-3 apoptotic signaling cascade required for the initiation of programmed cell death in cells fated to die during embryonic and postembryonic development. During oogenesis, required for germline apoptosis downstream of ced-9 and ced-4 but independently of egl-1. By cleaving and activating ced-8, promotes phosphatidylserine exposure on the surface of apoptotic cells; phosphatidylserine is a specific marker only present at the surface of apoptotic cells and acts as a specific signal for engulfment. By cleaving and converting dcr-1 into a deoxyribonuclease (DNase), promotes apoptotic chromosomal DNA fragmentation. By cleaving mitochondrial fission protein drp-1, may regulate the removal of mitochondria during apoptosis. During germline apoptosis, cleaves translation initiation factor ifg-1 (isoform p170) promoting cap-independent translation. During male tail morphogenesis, promotes apoptosis of the tail-spike cell downstream of ced-4 but independently of egl-1 and ced-9. By cleaving cnt-1, prevents the activation of the prosurvival akt-1/2 signaling pathway and thus promotes apoptosis. Downstream of ced-4, may play a role in sex-specific cell apoptosis by cleaving sex-determining protein fem-1. May regulate germline apoptosis in response to DNA damage, probably downstream of let-60/ras and mpk-1 pathway. Cleaves ced-9 in vitro. Cleaves csp-2 isoform b resulting in the removal of the propeptide and the generation of csp-2 subunit p31 in vitro. Independently of its apoptotic role has additional functions. Probably by cleaving and thereby activating actin-severing protein gsnl-1, required for the elimination of transient presynaptic components during larval development downstream of egl-1, ced-9 and ced-4 pathway. Together with ain-1, a component of the miRNA-induced-silencing complex (miRISC), regulates temporal cell fate patterning during larval development. Acts in cell fate patterning by cleaving heterochronic protein lin-28, likely promoting its degradation. Also cleaves heterochronic protein lin-14 and exonuclease disl-2 in vitro. Downstream of calreticulin crt-1 and ced-4 and independently of egl-1 and ced-9, plays a role in the initial steps of axonal regrowth following axotomy. Cleaves 14-3-3-like protein ftt-2, tubulin tbb-2 and calreticulin crt-1 in vitro. Plays also a role in resistance to S.typhimurium-mediated infection. The chain is Cell death protein 3 from Caenorhabditis remanei (Caenorhabditis vulgaris).